Consider the following 591-residue polypeptide: Serine/threonine-protein kinase Nek2 (591 aa).

Residues 4–258 form the Protein kinase domain; that stretch reads YEVLEQIGKG…AAQLLKHPQL (255 aa). Residues 10-18 and Lys-33 each bind ATP; that span reads IGKGAFGSA. Asp-129 acts as the Proton acceptor in catalysis. 3 disordered regions span residues 309–331, 382–408, and 500–534; these read LGNE…SSTR, ARNQ…TTPN, and RTDG…DTSS. Polar residues-rich tracts occupy residues 391-408 and 504-534; these read TSYN…TTPN and DNGS…DTSS.

The protein belongs to the protein kinase superfamily. NEK Ser/Thr protein kinase family. NIMA subfamily. As to expression, expressed in anthers, pistils and leaves.

The catalysed reaction is L-seryl-[protein] + ATP = O-phospho-L-seryl-[protein] + ADP + H(+). It carries out the reaction L-threonyl-[protein] + ATP = O-phospho-L-threonyl-[protein] + ADP + H(+). May be involved in plant development processes. This chain is Serine/threonine-protein kinase Nek2, found in Oryza sativa subsp. japonica (Rice).